The sequence spans 78 residues: Structural DNA-binding protein p10 (78 aa).

A compositionally biased stretch (low complexity) spans 1–27 (MPTKAGTKSTANKKTTKGSSKSGSSRG). Positions 1–41 (MPTKAGTKSTANKKTTKGSSKSGSSRGHTGKTHASSSMHSG) are disordered.

It belongs to the asfivirus P10 family.

Its subcellular location is the virion. Its function is as follows. May play a role in genome packaging through direct interaction with viral DNA. Binds to ssDNA and dsDNA with the same apparent affinity in vitro. This African swine fever virus (strain Badajoz 1971 Vero-adapted) (Ba71V) protein is Structural DNA-binding protein p10.